The sequence spans 229 residues: Vacuolar protein sorting-associated protein 24 homolog 1 (229 aa).

Residues 15 to 60 adopt a coiled-coil conformation; the sequence is KQLLRDWQRKLRQECRNIERQIRDIQKEERNVQKAIKEAAKRNDMV. The interval 193–215 is disordered; it reads VPAQKASTSREEEAVAEGVDDEE. Over residues 206-215 the composition is skewed to acidic residues; sequence AVAEGVDDEE.

This sequence belongs to the SNF7 family. As to quaternary structure, component of the endosomal sorting required for transport complex III (ESCRT-III), composed at least of VPS2, VPS20, VPS24 and VPS32. Interacts with SKD1.

The protein localises to the endosome. Component of the ESCRT-III complex, which is required for multivesicular bodies (MVBs) formation and sorting of endosomal cargo proteins into MVBs. The ESCRT-III complex is probably involved in the concentration of MVB cargo. The protein is Vacuolar protein sorting-associated protein 24 homolog 1 (VPS24-1) of Arabidopsis thaliana (Mouse-ear cress).